Consider the following 322-residue polypeptide: Hapalindole dimethylallyltransferase (322 aa).

Dimethylallyl diphosphate is bound by residues Arg46, Arg60, Lys115, Asn166, Tyr168, Arg221, Tyr225, and Lys275.

This sequence belongs to the aromatic prenyltransferase family.

It catalyses the reaction hapalindole G + dimethylallyl diphosphate = ambiguine A + diphosphate. It carries out the reaction hapalindole U + dimethylallyl diphosphate + H(+) = ambiguine H + diphosphate. With respect to regulation, activity is slightly increased in the presence of Mg(2+). Its function is as follows. Prenyltransferase involved in the biosynthesis of ambiguines, a family of hapalindole-type alkaloids. Catalyzes the reverse prenylation of hapalindole G or U at the C2 position with dimethylallyl diphosphate (DMAPP) to generate ambiguine A or H, respectively. In addition, accepts hapalindole A, an epimer of hapalindole G, and catalyzes normal prenylation at its C2 position. This is Hapalindole dimethylallyltransferase from Fischerella ambigua (strain UTEX 1903).